The following is a 563-amino-acid chain: Arginine--tRNA ligase (563 aa).

The 'HIGH' region signature appears at 108-118 (PNVAKEMHVGH).

This sequence belongs to the class-I aminoacyl-tRNA synthetase family. In terms of assembly, monomer.

It is found in the cytoplasm. The catalysed reaction is tRNA(Arg) + L-arginine + ATP = L-arginyl-tRNA(Arg) + AMP + diphosphate. This is Arginine--tRNA ligase (argS) from Pasteurella multocida (strain Pm70).